Consider the following 170-residue polypeptide: Shikimate kinase (170 aa).

15-20 (GAGKTT) is an ATP binding site. T19 is a binding site for Mg(2+). Residues D37, R61, and G83 each contribute to the substrate site. R121 is an ATP binding site. R140 is a substrate binding site.

It belongs to the shikimate kinase family. As to quaternary structure, monomer. The cofactor is Mg(2+).

The protein resides in the cytoplasm. The enzyme catalyses shikimate + ATP = 3-phosphoshikimate + ADP + H(+). It participates in metabolic intermediate biosynthesis; chorismate biosynthesis; chorismate from D-erythrose 4-phosphate and phosphoenolpyruvate: step 5/7. Its function is as follows. Catalyzes the specific phosphorylation of the 3-hydroxyl group of shikimic acid using ATP as a cosubstrate. The chain is Shikimate kinase from Neisseria meningitidis serogroup C (strain 053442).